A 117-amino-acid chain; its full sequence is Large ribosomal subunit protein uL22 (117 aa).

The protein belongs to the universal ribosomal protein uL22 family. Part of the 50S ribosomal subunit.

Functionally, this protein binds specifically to 23S rRNA; its binding is stimulated by other ribosomal proteins, e.g. L4, L17, and L20. It is important during the early stages of 50S assembly. It makes multiple contacts with different domains of the 23S rRNA in the assembled 50S subunit and ribosome. Its function is as follows. The globular domain of the protein is located near the polypeptide exit tunnel on the outside of the subunit, while an extended beta-hairpin is found that lines the wall of the exit tunnel in the center of the 70S ribosome. The sequence is that of Large ribosomal subunit protein uL22 from Staphylococcus epidermidis (strain ATCC 35984 / DSM 28319 / BCRC 17069 / CCUG 31568 / BM 3577 / RP62A).